Here is a 229-residue protein sequence, read N- to C-terminus: Sugar fermentation stimulation protein homolog (229 aa).

The protein belongs to the SfsA family.

In Carboxydothermus hydrogenoformans (strain ATCC BAA-161 / DSM 6008 / Z-2901), this protein is Sugar fermentation stimulation protein homolog.